Here is an 867-residue protein sequence, read N- to C-terminus: Protein translocase subunit SecA (867 aa).

Residues Q86, 104–108 (GEGKT), and D499 each bind ATP. Positions 848, 850, 859, and 860 each coordinate Zn(2+).

Belongs to the SecA family. In terms of assembly, monomer and homodimer. Part of the essential Sec protein translocation apparatus which comprises SecA, SecYEG and auxiliary proteins SecDF-YajC and YidC. Zn(2+) is required as a cofactor.

It localises to the cell membrane. It is found in the cytoplasm. The catalysed reaction is ATP + H2O + cellular proteinSide 1 = ADP + phosphate + cellular proteinSide 2.. Its function is as follows. Part of the Sec protein translocase complex. Interacts with the SecYEG preprotein conducting channel. Has a central role in coupling the hydrolysis of ATP to the transfer of proteins into and across the cell membrane, serving both as a receptor for the preprotein-SecB complex and as an ATP-driven molecular motor driving the stepwise translocation of polypeptide chains across the membrane. The chain is Protein translocase subunit SecA from Wolbachia sp. subsp. Brugia malayi (strain TRS).